The following is a 122-amino-acid chain: Large ribosomal subunit protein uL14 (122 aa).

This sequence belongs to the universal ribosomal protein uL14 family. As to quaternary structure, part of the 50S ribosomal subunit. Forms a cluster with proteins L3 and L19. In the 70S ribosome, L14 and L19 interact and together make contacts with the 16S rRNA in bridges B5 and B8.

Binds to 23S rRNA. Forms part of two intersubunit bridges in the 70S ribosome. The polypeptide is Large ribosomal subunit protein uL14 (Nautilia profundicola (strain ATCC BAA-1463 / DSM 18972 / AmH)).